We begin with the raw amino-acid sequence, 427 residues long: MEKKAFFQQLDERTDIRYTDSGMKIIRLKFPRAHLRLCNVKIDFGSRDVCLQAESGDTLLPYGTAHFLEHLLFWHNGRNLYTDFFAHGALLNAFTTYTDTNFMFTSLPDRLRQTIPILLDALWNHSFDKKMITQEKAVITSEIQTAHLNHQLYYHYQLISMLSPASPAAVFPAGRIEDIEALDIRDLQKAYNAAYQPQRMTLFLIGGSEDTEALLPPHLRLEKRPNHKAERKIISACPPPALSQKMVLGNEERIEDTWTGLQVGAIPGQNNLLTLKLYWDIASRILFQLDSPFFQEIQQTYRLEIDCLSAEAHMYEDGGFLILHSQGAHSSAYIDVASYYVTQQKQQIETWLQYGKDSLTDAIIYDSDYVRKCFEWAAECDRCDCTFLDMYRIIHDMNSQDFLSLIDALASSKKAVIHVSQKEAIGQ.

His66 is a Zn(2+) binding site. Residue Glu69 is the Proton acceptor of the active site. The Zn(2+) site is built by His70 and Glu142.

Belongs to the peptidase M16 family. Requires Zn(2+) as cofactor.

Its function is as follows. Required for production of the bacteriocin subtilosin. Could catalyze some step in the processing of presubtilosin. The polypeptide is Putative zinc protease AlbF (albF) (Bacillus subtilis).